We begin with the raw amino-acid sequence, 306 residues long: LysM and putative peptidoglycan-binding domain-containing protein 3 (306 aa).

The Extracellular portion of the chain corresponds to 1–217 (MAGRHQNRSF…PYYGADWGIG (217 aa)). The N-linked (GlcNAc...) asparagine glycan is linked to Asn7. Ser55 carries the phosphoserine modification. In terms of domain architecture, LysM spans 65–109 (LTKDIQEGDTLNAIALQYCCTVADIKRVNNLISDQDFFALRSIKI). A helical membrane pass occupies residues 218–238 (WWTAVVIMLIVGIITPVFYLL). Residues 239–306 (YYEILAKVDV…SQSPAAQQET (68 aa)) are Cytoplasmic-facing.

Its subcellular location is the cell membrane. It is found in the golgi apparatus. Functionally, essential for Golgi structural integrity. The sequence is that of LysM and putative peptidoglycan-binding domain-containing protein 3 (LYSMD3) from Homo sapiens (Human).